The following is a 148-amino-acid chain: Ponticulin-like protein D (148 aa).

An N-terminal signal peptide occupies residues 1-20 (MLLNKSLLLLVAFVFAIVSA). N-linked (GlcNAc...) asparagine glycosylation is present at Asn-67. The GPI-like-anchor amidated aspartate moiety is linked to residue Asp-125. A propeptide spans 126–148 (SSAAATMIASFSAILIALLFALL) (removed in mature form).

Belongs to the ponticulin family. In terms of processing, the GPI-like-anchor contains a phosphoceramide group, rather than a phosphatidyl group.

The protein resides in the cell membrane. This chain is Ponticulin-like protein D (ponD), found in Dictyostelium discoideum (Social amoeba).